A 469-amino-acid chain; its full sequence is tRNA-2-methylthio-N(6)-dimethylallyladenosine synthase (469 aa).

The MTTase N-terminal domain occupies 22–142 (RKVFIKTYGC…LPEALRRAKE (121 aa)). Residues C31, C67, C105, C183, C187, and C190 each coordinate [4Fe-4S] cluster. Residues 169 to 401 (RARGVTAFLT…QALLLKQQQE (233 aa)) enclose the Radical SAM core domain. Residues 404 to 466 (ESCIGKEIDL…NNSLFAERAE (63 aa)) enclose the TRAM domain.

It belongs to the methylthiotransferase family. MiaB subfamily. As to quaternary structure, monomer. Requires [4Fe-4S] cluster as cofactor.

It localises to the cytoplasm. The enzyme catalyses N(6)-dimethylallyladenosine(37) in tRNA + (sulfur carrier)-SH + AH2 + 2 S-adenosyl-L-methionine = 2-methylsulfanyl-N(6)-dimethylallyladenosine(37) in tRNA + (sulfur carrier)-H + 5'-deoxyadenosine + L-methionine + A + S-adenosyl-L-homocysteine + 2 H(+). Catalyzes the methylthiolation of N6-(dimethylallyl)adenosine (i(6)A), leading to the formation of 2-methylthio-N6-(dimethylallyl)adenosine (ms(2)i(6)A) at position 37 in tRNAs that read codons beginning with uridine. This is tRNA-2-methylthio-N(6)-dimethylallyladenosine synthase from Rhizobium leguminosarum bv. trifolii (strain WSM2304).